The sequence spans 196 residues: 3-isopropylmalate dehydratase small subunit (196 aa).

This sequence belongs to the LeuD family. LeuD type 1 subfamily. In terms of assembly, heterodimer of LeuC and LeuD.

The catalysed reaction is (2R,3S)-3-isopropylmalate = (2S)-2-isopropylmalate. Its pathway is amino-acid biosynthesis; L-leucine biosynthesis; L-leucine from 3-methyl-2-oxobutanoate: step 2/4. Functionally, catalyzes the isomerization between 2-isopropylmalate and 3-isopropylmalate, via the formation of 2-isopropylmaleate. The chain is 3-isopropylmalate dehydratase small subunit from Corynebacterium diphtheriae (strain ATCC 700971 / NCTC 13129 / Biotype gravis).